Reading from the N-terminus, the 405-residue chain is Glutathione S-transferase LANCL1 (405 aa).

A Zn(2+)-binding site is contributed by Cys-282. Lys-323 is a binding site for glutathione. Residues Cys-328 and His-329 each coordinate Zn(2+). Residue 370–373 coordinates glutathione; it reads RTPD.

Belongs to the LanC-like protein family.

The protein resides in the cytoplasm. The protein localises to the cell membrane. It catalyses the reaction RX + glutathione = an S-substituted glutathione + a halide anion + H(+). The enzyme catalyses 1-chloro-2,4-dinitrobenzene + glutathione = 2,4-dinitrophenyl-S-glutathione + chloride + H(+). In terms of biological role, functions as a glutathione transferase. Catalyzes conjugation of the glutathione (GSH) to artificial substrates 1-chloro-2,4-dinitrobenzene (CDNB) and p-nitrophenyl acetate. Binds glutathione. In Danio rerio (Zebrafish), this protein is Glutathione S-transferase LANCL1.